Here is a 179-residue protein sequence, read N- to C-terminus: NADH-quinone oxidoreductase subunit B 1 (179 aa).

[4Fe-4S] cluster-binding residues include Cys-38, Cys-39, Cys-104, and Cys-133.

Belongs to the complex I 20 kDa subunit family. NDH-1 is composed of 14 different subunits. Subunits NuoB, C, D, E, F, and G constitute the peripheral sector of the complex. Requires [4Fe-4S] cluster as cofactor.

It localises to the cell membrane. The catalysed reaction is a quinone + NADH + 5 H(+)(in) = a quinol + NAD(+) + 4 H(+)(out). Its function is as follows. NDH-1 shuttles electrons from NADH, via FMN and iron-sulfur (Fe-S) centers, to quinones in the respiratory chain. The immediate electron acceptor for the enzyme in this species is believed to be ubiquinone. Couples the redox reaction to proton translocation (for every two electrons transferred, four hydrogen ions are translocated across the cytoplasmic membrane), and thus conserves the redox energy in a proton gradient. The chain is NADH-quinone oxidoreductase subunit B 1 from Herpetosiphon aurantiacus (strain ATCC 23779 / DSM 785 / 114-95).